We begin with the raw amino-acid sequence, 433 residues long: Chaperone SurA (433 aa).

Positions 1–24 are cleaved as a signal peptide; sequence MDGIKLLLSIIILYFYTYINCAIA. 2 PpiC domains span residues 173–274 and 285–385; these read NTTF…KVHD and ITEV…QLQN.

Its subcellular location is the periplasm. The catalysed reaction is [protein]-peptidylproline (omega=180) = [protein]-peptidylproline (omega=0). Functionally, chaperone involved in the correct folding and assembly of outer membrane proteins. Recognizes specific patterns of aromatic residues and the orientation of their side chains, which are found more frequently in integral outer membrane proteins. May act in both early periplasmic and late outer membrane-associated steps of protein maturation. The protein is Chaperone SurA of Baumannia cicadellinicola subsp. Homalodisca coagulata.